The chain runs to 385 residues: Outer membrane protein P2 (385 aa).

Positions 1–20 (MKKTLAALIVGAFAASAANA) are cleaved as a signal peptide.

It belongs to the Gram-negative porin family. Homotrimer.

It localises to the cell outer membrane. In terms of biological role, forms pores that allow passive diffusion of small molecules across the outer membrane. This chain is Outer membrane protein P2 (ompP2), found in Haemophilus influenzae.